The following is a 322-amino-acid chain: o-succinylbenzoate synthase (322 aa).

The active-site Proton donor is the Lys-136. Residues Asp-165, Glu-194, and Asp-219 each coordinate Mg(2+). The Proton acceptor role is filled by Lys-243.

This sequence belongs to the mandelate racemase/muconate lactonizing enzyme family. MenC type 1 subfamily. As to quaternary structure, monomer. A divalent metal cation is required as a cofactor.

The enzyme catalyses (1R,6R)-6-hydroxy-2-succinyl-cyclohexa-2,4-diene-1-carboxylate = 2-succinylbenzoate + H2O. The protein operates within quinol/quinone metabolism; 1,4-dihydroxy-2-naphthoate biosynthesis; 1,4-dihydroxy-2-naphthoate from chorismate: step 4/7. It functions in the pathway cofactor biosynthesis; phylloquinone biosynthesis. In terms of biological role, converts 2-succinyl-6-hydroxy-2,4-cyclohexadiene-1-carboxylate (SHCHC) to 2-succinylbenzoate (OSB). Does not show N-succinylamino acid racemase (NSAR) activity with N-succinyl-L-phenylglycine as substrate. The polypeptide is o-succinylbenzoate synthase (Thermosynechococcus vestitus (strain NIES-2133 / IAM M-273 / BP-1)).